We begin with the raw amino-acid sequence, 300 residues long: Epimerase family protein SACOL0834 (300 aa).

This sequence belongs to the NAD(P)-dependent epimerase/dehydratase family. SDR39U1 subfamily.

The protein is Epimerase family protein SACOL0834 of Staphylococcus aureus (strain COL).